The primary structure comprises 89 residues: Large ribosomal subunit protein eL34 (89 aa).

It belongs to the eukaryotic ribosomal protein eL34 family.

The protein is Large ribosomal subunit protein eL34 of Methanococcus maripaludis (strain C6 / ATCC BAA-1332).